A 927-amino-acid chain; its full sequence is Disks large homolog 1 (927 aa).

The region spanning 4–64 (RKQDTQRALH…FYEVTLLDNP (61 aa)) is the L27 domain. Threonine 115 is modified (phosphothreonine). Serine 122, serine 138, and serine 158 each carry phosphoserine. The segment at 162–212 (PTEAVPPSSPTVPVIPVLPVPAENTVILPTIPQANPPPVLVNTDSLETSTY) is interaction with SH3 domains. The segment at 224 to 546 (EITLERGNSG…QAVTIVAQYR (323 aa)) is required for interaction with MARCHF2. PDZ domains lie at 230–317 (GNSG…SEKI), 325–412 (GPKG…YMND), and 474–555 (TGLG…RFEA). Serine 232 bears the Phosphoserine mark. Residue tyrosine 399 is modified to Phosphotyrosine. 9 positions are modified to phosphoserine: serine 568, serine 573, serine 575, serine 579, serine 598, serine 619, serine 707, serine 710, and serine 857. An SH3 domain is found at 581–651 (KRSLYVRALF…PSKRRVEKKE (71 aa)). The region spanning 683-858 (RKFPFYKNKD…ISIFIKPKSM (176 aa)) is the Guanylate kinase-like domain. Positions 691 to 719 (KDQSEQETSDADQHITSNASDSESSYRGQ) are disordered. The span at 704–717 (HITSNASDSESSYR) shows a compositional bias: polar residues.

It belongs to the MAGUK family. As to quaternary structure, homotetramer. Interacts (via guanylate kinase-like domain) with DLGAP1, DLGAP2, DLGAP3, DLGAP4 and MAP1A. Interacts (via guanylate kinase-like domain) with KIF13B. May interact with HTR2A. Interacts (via PDZ domains) with GRIA1. Interacts (via PDZ domains) with GRIN2A. Interacts (via PDZ domains) with KCND2 and KCND3. Interacts (via PDZ domains) with KCNA1, KCNA2, KCNA3 and KCNA4. Interacts (via PDZ domains) with ADGRA3. Interacts with KCNF1. Interacts with CAMK2. Interacts with cytoskeleton-associated protein EPB41. Interacts with cytoskeleton-associated protein EZR. Found in a complex with KCNA5 and CAV3. Found in a complex with APC and CTNNB1. Interacts (via PDZ domains) with APC. Interacts with CDH1 through binding to PIK3R1. Forms multiprotein complexes with CASK, LIN7A, LIN7B, LIN7C, APBA1, and KCNJ12. Interacts with TOPK. Forms a tripartite complex composed of DLG1, MPP7 and LIN7 (LIN7A or LIN7C). May interact with TJAP1. Interacts with PTEN. Interacts with FRMPD4 (via C-terminus). Interacts with LRFN1, LRFN2 and LRFN4. Interacts with SFPQ. Interacts (via PDZ domains) with ADGRA2 (via PDZ-binding motif). Interacts with ADAM10; this interaction recruits ADAM10 to the cell membrane during long-term depression in hippocampal neurons. Interacts with DGKI (via PDZ-binding motif). Interacts (via PDZ domains) with MARCHF2 (via PDZ domain); the interaction leads to DLG1 ubiqtuitination and degradation. Interacts (via N-terminus) with MPP3; this interaction connects CADM1 with DLG1 and links CADM1 with the regulatory subunit of phosphoinositide-3-kinase (PI3K) by forming a multiprotein complex and participates in cell spreading. Post-translationally, phosphorylated by MAPK12. Phosphorylation of Ser-232 regulates association with GRIN2A. Ubiquitinated; by MARCHF2 which results in its degradation.

The protein resides in the cell membrane. The protein localises to the basolateral cell membrane. It localises to the endoplasmic reticulum membrane. It is found in the postsynaptic density. Its subcellular location is the synapse. The protein resides in the sarcolemma. The protein localises to the apical cell membrane. It localises to the cell junction. It is found in the cytoplasm. Its function is as follows. Essential multidomain scaffolding protein required for normal development. Recruits channels, receptors and signaling molecules to discrete plasma membrane domains in polarized cells. Promotes epithelial cell layer barrier function via maintaining cell-cell adhesion. May also play a role in adherens junction assembly, signal transduction, cell proliferation, synaptogenesis and lymphocyte activation. Regulates the excitability of cardiac myocytes by modulating the functional expression of Kv4 channels. Functional regulator of Kv1.5 channel. During long-term depression in hippocampal neurons, it recruits ADAM10 to the plasma membrane. The protein is Disks large homolog 1 (DLG1) of Canis lupus familiaris (Dog).